The primary structure comprises 341 residues: uncharacterized protein (341 aa).

It belongs to the Gfo/Idh/MocA family.

This is an uncharacterized protein from Bacillus subtilis (strain 168).